Consider the following 212-residue polypeptide: Large ribosomal subunit protein uL3 (212 aa).

Over residues 140-155 (SVSHRAIGSTGQNQSP) the composition is skewed to polar residues. Residues 140–166 (SVSHRAIGSTGQNQSPGKVFKGKKMPG) form a disordered region. An N5-methylglutamine modification is found at glutamine 153.

It belongs to the universal ribosomal protein uL3 family. As to quaternary structure, part of the 50S ribosomal subunit. Forms a cluster with proteins L14 and L19. In terms of processing, methylated by PrmB.

Its function is as follows. One of the primary rRNA binding proteins, it binds directly near the 3'-end of the 23S rRNA, where it nucleates assembly of the 50S subunit. This chain is Large ribosomal subunit protein uL3, found in Psychrobacter cryohalolentis (strain ATCC BAA-1226 / DSM 17306 / VKM B-2378 / K5).